We begin with the raw amino-acid sequence, 1692 residues long: Adenylate cyclase (1692 aa).

Disordered regions lie at residues 1–22 (MDQSKRLLKSAVPNPPEHFKTG) and 103–142 (SLSDTGRTKSDTALAARESSEKSEVPRDTRSAGIKPYKEN). Over residues 120–132 (ESSEKSEVPRDTR) the composition is skewed to basic and acidic residues. The interval 174–195 (FTNLTFPEPISDDSDSVEFQRD) is required for interaction with gpa2. Positions 292–380 (KEFFLRVYRD…SDEEINEEDN (89 aa)) constitute a Ras-associating domain. LRR repeat units lie at residues 430–450 (ELISLNVSHNLSLDLPLDFME), 454–474 (KLKRLDISNNLRSPRGKPITA), 477–498 (QLEVLNMSRNDIYELDPLIFSG), 503–524 (SLKELNIANNKLFFLPHSTRYL), 526–547 (NLTYLDLSYNNFVTFPLIITEL), 549–570 (QLETLNFSHNLLSQISSKIGSL), 572–594 (KLKHLYLQFNDLSNRLPQEIGLL), 596–617 (NLETIDLSYNAITNIASLSECP), 618–639 (KLNSINVACNLLSFYEYSNPSA), 660–681 (NLVYFDISHAKLIGLKDSVIET), 684–705 (NVETVKVNYNHFTSISDAISAM), 707–729 (NLKYLSCTNCEMSYVSPNLGKLK), 730–751 (HLVHLDLHANNIKIFPEEVWQV), 753–774 (SLKVVNLSSNILEKIKLPVATS), 783–805 (QLKIMRTLSGNPVSSLSSQEFVM), 807–827 (TVEELYLVDNRLGNDCFTALE), 831–852 (CLKVLNLSYNYLTEIPSKFFQN), 855–876 (DLKHLFVSGNELANLSISSTAQ), 878–899 (LLETLYANGNRLSSFPKNEALS), 901–922 (SLRFLDISTNNLQNLAVEKAEK), and 930–951 (QLEYLNLSGNTWFRFSEHEDTN). Residues 995–1275 (RYGVCGYLSR…KNVLVVIVEL (281 aa)) enclose the PPM-type phosphatase domain. The Guanylate cyclase domain occupies 1332–1469 (AMVFTDIKNS…PVVNRTSRVV (138 aa)). 2 residues coordinate Mg(2+): aspartate 1337 and aspartate 1380. 2 residues coordinate Mn(2+): aspartate 1337 and aspartate 1380. Residues 1585–1597 (SDSKSVHGEEGGS) show a composition bias toward basic and acidic residues. The disordered stretch occupies residues 1585-1614 (SDSKSVHGEEGGSGKRSVSSLRNVSPSEST). Residues 1600 to 1614 (RSVSSLRNVSPSEST) are compositionally biased toward polar residues.

It belongs to the adenylyl cyclase class-3 family. In terms of assembly, interacts (via N-terminus) with gpa2; the interaction is direct and serves to activate adenylate cyclase and cAMP-PKA signaling, to repress sexual development and gluconeogenesis. Interacts with git1. Mn(2+) is required as a cofactor.

The protein localises to the cytoplasm. It catalyses the reaction ATP = 3',5'-cyclic AMP + diphosphate. With respect to regulation, activated by binding G protein gpa2. Activated by git1. In contrast to yeast cyclase, S.pombe cyclase is not likely to be regulated by RAS proteins. Acts in glucose-induced cAMP signaling by catalyzing the synthesis of the second messenger, cAMP to activate PKA signaling and repress sexual development and gluconeogenesis. This Schizosaccharomyces pombe (strain 972 / ATCC 24843) (Fission yeast) protein is Adenylate cyclase.